A 143-amino-acid chain; its full sequence is Class II hydrophobin qid3 (143 aa).

The N-terminal stretch at 1–17 (MKFLTVAAVFFTAVLAA) is a signal peptide. Over residues 20 to 37 (NYPPPPPPTYAPPPPTYT) the composition is skewed to pro residues. The segment at 20 to 67 (NYPPPPPPTYAPPPPTYTLPPNGNGGGNGNGNGNGNGGGNGNGNGNTN) is disordered. 10 tandem repeats follow at residues 41 to 42 (NG), 43 to 44 (NG), 47 to 48 (NG), 49 to 50 (NG), 51 to 52 (NG), 53 to 54 (NG), 55 to 56 (NG), 59 to 60 (NG), 61 to 62 (NG), and 63 to 64 (NG). The segment at 41-64 (NGNGGGNGNGNGNGNGGGNGNGNG) is 10 X 2 AA repeats of N-G. Over residues 42–63 (GNGGGNGNGNGNGNGGGNGNGN) the composition is skewed to gly residues. Disulfide bonds link C74–C124, C85–C97, and C125–C136.

It belongs to the cerato-ulmin hydrophobin family. As to quaternary structure, homotetramer. Further self-assembles to form highly ordered films at water-air interfaces through intermolecular interactions.

The protein localises to the secreted. It is found in the cell wall. Functionally, aerial growth, conidiation, and dispersal of filamentous fungi in the environment rely upon a capability of their secreting small amphipathic proteins called hydrophobins (HPBs) with low sequence identity. Class I can self-assemble into an outermost layer of rodlet bundles on aerial cell surfaces, conferring cellular hydrophobicity that supports fungal growth, development and dispersal; whereas Class II form highly ordered films at water-air interfaces through intermolecular interactions but contribute nothing to the rodlet structure. Qid3 is a class II hydrophobin that might acts as a chitinase inhibitor at the cell surface that blocks the degradation of the chitin rings localized in the budding region of dividing cells. This is Class II hydrophobin qid3 from Trichoderma harzianum (Hypocrea lixii).